Reading from the N-terminus, the 159-residue chain is Immunoglobulin J chain (159 aa).

Positions 1–21 (MKTHLLLWGVLAIFVKAVLVT) are cleaved as a signal peptide. Cystine bridges form between Cys34–Cys123, Cys93–Cys113, and Cys131–Cys156. Asn70 is a glycosylation site (N-linked (GlcNAc...) (complex) asparagine).

In terms of assembly, part of the secretory IgA (sIgA) complex that consists of two, four or five IgA monomers, and two additional non-Ig polypeptides, namely the JCHAIN and the secretory component (the proteolytic product of PIGR). Part of the secretory IgM (sIgM) complex that consist of five IgM monomers, and two additional non-Ig polypeptides, namely the JCHAIN and the secretory component (the proteolytic product of PIGR). JCHAIN-containing IgM interacts (via CH4 domain) with FCRM (via Ig-like domain).

It localises to the secreted. Serves to link two monomer units of either IgM or IgA. In the case of IgM, the J chain-joined dimer is a nucleating unit for the IgM pentamer, and in the case of IgA it induces dimers and/or larger polymers. It also helps to bind these immunoglobulins to secretory component. This chain is Immunoglobulin J chain, found in Mus musculus (Mouse).